The following is a 302-amino-acid chain: Protein ECM11 (302 aa).

2 disordered regions span residues 1 to 67 and 162 to 187; these read MTVI…TDKQ and SLNG…GSYQ. The span at 35-46 shows a compositional bias: polar residues; it reads NKPPSSINSRSG. Residues 56–67 are compositionally biased toward basic and acidic residues; the sequence is APEKKINNTDKQ. Residues 162–171 are compositionally biased toward polar residues; sequence SLNGENTSSP.

Interacts with CDC6.

The protein resides in the nucleus. May be involved in cell wall organization and biogenesis. The chain is Protein ECM11 (ECM11) from Saccharomyces cerevisiae (strain ATCC 204508 / S288c) (Baker's yeast).